A 215-amino-acid chain; its full sequence is CASP-like protein 1E1 (215 aa).

At Met-1–Cys-51 the chain is on the cytoplasmic side. Residues Cys-52–Ala-72 traverse the membrane as a helical segment. Topologically, residues Asp-73–Ser-103 are extracellular. A helical membrane pass occupies residues Ala-104–Ala-124. The Cytoplasmic segment spans residues Ala-125–Ser-130. Residues Ala-131–Gly-151 form a helical membrane-spanning segment. At Ala-152–Ala-185 the chain is on the extracellular side. Residues Ala-186 to Leu-206 traverse the membrane as a helical segment. The Cytoplasmic portion of the chain corresponds to Thr-207–Tyr-215.

This sequence belongs to the Casparian strip membrane proteins (CASP) family. In terms of assembly, homodimer and heterodimers.

The protein resides in the cell membrane. This is CASP-like protein 1E1 from Oryza sativa subsp. japonica (Rice).